The sequence spans 48 residues: Delta-stichotoxin-Hcr1b (48 aa).

Cystine bridges form between Cys-3-Cys-43, Cys-5-Cys-33, and Cys-26-Cys-44.

The protein belongs to the sea anemone sodium channel inhibitory toxin family. Type II subfamily.

Its subcellular location is the secreted. It localises to the nematocyst. Binds to site 3 of voltage-gated sodium channels and inhibits the inactivation process. The chain is Delta-stichotoxin-Hcr1b from Radianthus crispa (Leathery sea anemone).